We begin with the raw amino-acid sequence, 101 residues long: Small ribosomal subunit protein uS14A (101 aa).

Disordered stretches follow at residues 1–21 (MAKKSKIAKNEQRKEVVAHHA) and 49–73 (QRLPRDASPTRVRNRDAADGRPRGT). Composition is skewed to basic and acidic residues over residues 8–21 (AKNEQRKEVVAHHA) and 61–70 (RNRDAADGRP).

Belongs to the universal ribosomal protein uS14 family. In terms of assembly, part of the 30S ribosomal subunit. Contacts proteins S3 and S10.

In terms of biological role, binds 16S rRNA, required for the assembly of 30S particles and may also be responsible for determining the conformation of the 16S rRNA at the A site. The protein is Small ribosomal subunit protein uS14A of Kineococcus radiotolerans (strain ATCC BAA-149 / DSM 14245 / SRS30216).